Reading from the N-terminus, the 285-residue chain is tRNA U34 carboxymethyltransferase (285 aa).

Residues Lys56, Trp70, Lys75, Gly94, 143–144, Tyr163, and Arg278 contribute to the carboxy-S-adenosyl-L-methionine site; that span reads VE.

Belongs to the class I-like SAM-binding methyltransferase superfamily. CmoB family. Homotetramer.

The catalysed reaction is carboxy-S-adenosyl-L-methionine + 5-hydroxyuridine(34) in tRNA = 5-carboxymethoxyuridine(34) in tRNA + S-adenosyl-L-homocysteine + H(+). Catalyzes carboxymethyl transfer from carboxy-S-adenosyl-L-methionine (Cx-SAM) to 5-hydroxyuridine (ho5U) to form 5-carboxymethoxyuridine (cmo5U) at position 34 in tRNAs. In Campylobacter hominis (strain ATCC BAA-381 / DSM 21671 / CCUG 45161 / LMG 19568 / NCTC 13146 / CH001A), this protein is tRNA U34 carboxymethyltransferase.